We begin with the raw amino-acid sequence, 266 residues long: MWWFQQGLSFLPSALVIWTSAAFIFSYITAVTLHHIDPALPYISDTGTVAPEKCLFGAMLNIAAVLCIATIYVRYKQVHALSPEENVIIKLNKAGLVLGILSCLGLSIVANFQKTTLFAAHVSGAVLTFGMGSLYMFVQTILSYQMQPKIHGKQVFWIRLLLVIWCGVSALSMLTCSSVLHSGNFGTDLEQKLHWNPEDKGYVLHMITTAAEWSMSFSFFGFFLTYIRDFQKISLRVEANLHGLTLYDTAPCPINNERTRLLSRDI.

Helical transmembrane passes span 8 to 28 (LSFL…FSYI), 53 to 73 (KCLF…TIYV), 88 to 108 (IIKL…GLSI), 118 to 138 (FAAH…YMFV), 160 to 180 (LLLV…SSVL), and 207 to 227 (ITTA…LTYI).

Belongs to the DRAM/TMEM150 family. Expression is down-regulated in ovarian tumors (at protein level). Widely expressed with highest levels in placenta and heart. Expressed in the retina. Not detected in brain or thymus.

Its subcellular location is the lysosome membrane. It localises to the photoreceptor inner segment. The protein resides in the apical cell membrane. In terms of biological role, plays a role in the initiation of autophagy. In the retina, might be involved in the process of photoreceptor cells renewal and recycling to preserve visual function. Induces apoptotic cell death when coexpressed with DRAM1. The sequence is that of DNA damage-regulated autophagy modulator protein 2 (DRAM2) from Homo sapiens (Human).